Consider the following 95-residue polypeptide: Putative protein RDUR (95 aa).

The span at 1–12 (MNNSFNKEDRMS) shows a compositional bias: basic and acidic residues. The disordered stretch occupies residues 1–20 (MNNSFNKEDRMSSDTMVGSC).

Could play a role in innate immunity against viruses. This chain is Putative protein RDUR, found in Homo sapiens (Human).